A 271-amino-acid polypeptide reads, in one-letter code: MFSIQQPLLVFSDLDGTLLDSHSYDWQPAAPWLSRLREANVPVILCSSKTSAEMLYLQKMLGLQGLPLIAENGAVIQLAEQWQEIDGFPRIISGISHGEISQVLNTLREKEHFKFTTFDDVDDATIAEWTGLSRSQAALTQLHEASVTLIWRDSDERMAQFTARLNELGLQFMQGARFWHVLDASAGKDQAANWIIATYQQLSGKRPTTLGLGDGPNDAPLLEVMDYAVIVKGLNREGVHLHDEDPARVWRTQREGPEGWREGLDHFFSAR.

D13 serves as the catalytic Nucleophile. Positions 13, 15, and 214 each coordinate Mg(2+).

This sequence belongs to the HAD-like hydrolase superfamily. MPGP family. The cofactor is Mg(2+).

Its subcellular location is the cytoplasm. It catalyses the reaction 2-O-(alpha-D-mannosyl)-3-phosphoglycerate + H2O = (2R)-2-O-(alpha-D-mannosyl)-glycerate + phosphate. In Escherichia coli O157:H7, this protein is Mannosyl-3-phosphoglycerate phosphatase (yedP).